We begin with the raw amino-acid sequence, 504 residues long: uncharacterized protein (504 aa).

A helical transmembrane segment spans residues 26–46 (ILFLLLGLIILVNISINVTTV). The segment covering 103-112 (PTQCSSSSTH) has biased composition (polar residues). 3 disordered regions span residues 103 to 180 (PTQC…TRPM), 313 to 402 (YDAR…PLTT), and 431 to 504 (QRLA…GKLN). A compositionally biased stretch (basic residues) spans 113-128 (YFRKHSNDRRSRRRYC). Residues 135-147 (QIRQSNQQQSCHS) show a composition bias toward polar residues. Positions 313 to 324 (YDARDQWRRGTE) are enriched in basic and acidic residues. Residues 349–377 (SSQAHRQNFPSYTHSQPNHSPPQSVGYSS) show a composition bias toward polar residues. 2 stretches are compositionally biased toward basic and acidic residues: residues 378 to 389 (RESHEVRRRAPD) and 467 to 478 (LELKRQVQENRG). Residues 494-504 (SLHRSRTGKLN) are compositionally biased toward basic residues.

The protein resides in the membrane. This is an uncharacterized protein from Rattus norvegicus (Rat).